We begin with the raw amino-acid sequence, 203 residues long: ATP-dependent Clp protease proteolytic subunit 1 (203 aa).

Ser-101 serves as the catalytic Nucleophile. His-126 is a catalytic residue.

This sequence belongs to the peptidase S14 family. In terms of assembly, fourteen ClpP subunits assemble into 2 heptameric rings which stack back to back to give a disk-like structure with a central cavity, resembling the structure of eukaryotic proteasomes.

It is found in the cytoplasm. The enzyme catalyses Hydrolysis of proteins to small peptides in the presence of ATP and magnesium. alpha-casein is the usual test substrate. In the absence of ATP, only oligopeptides shorter than five residues are hydrolyzed (such as succinyl-Leu-Tyr-|-NHMec, and Leu-Tyr-Leu-|-Tyr-Trp, in which cleavage of the -Tyr-|-Leu- and -Tyr-|-Trp bonds also occurs).. Cleaves peptides in various proteins in a process that requires ATP hydrolysis. Has a chymotrypsin-like activity. Plays a major role in the degradation of misfolded proteins. This chain is ATP-dependent Clp protease proteolytic subunit 1, found in Synechococcus sp. (strain JA-3-3Ab) (Cyanobacteria bacterium Yellowstone A-Prime).